The chain runs to 374 residues: (R)-phenyllactyl-CoA dehydratase beta subunit (374 aa).

Belongs to the FldB/FldC dehydratase alpha/beta subunit family. As to quaternary structure, part of the heterotrimeric phenyllactate dehydratase complex FldABC, composed of (R)-phenyllactate CoA-transferase (FldA) and a heterodimeric (R)-phenyllactyl-CoA dehydratase (FldB and FldC). Requires [4Fe-4S] cluster as cofactor. It depends on No flavin could be detected in the FldABC complex, and the addition of FAD, FMN or riboflavin to the dehydratase do not increase enzymatic activity. as a cofactor.

It carries out the reaction (R)-3-phenyllactoyl-CoA = (E)-cinnamoyl-CoA + H2O. It catalyses the reaction (R)-3-(4-hydroxyphenyl)lactoyl-CoA = (E)-4-coumaroyl-CoA + H2O. The catalysed reaction is (R)-3-(indol-3-yl)lactoyl-CoA = (E)-3-(indol-3-yl)acryloyl-CoA + H2O. Its pathway is amino-acid degradation; L-phenylalanine degradation. Component of the phenyllactate dehydratase complex FldABC that is involved in the fermentation of L-phenylalanine via a Stickland reaction. This complex catalyzes the reversible syn-dehydration of (R)-phenyllactate to (E)-cinnamate in two steps, a CoA-transfer from cinnamoyl-CoA to phenyllactate, catalyzed by FldA, followed by the dehydration of phenyllactyl-CoA to cinnamoyl-CoA, catalyzed by FldB and FldC. Requires the activator FldI to initiate catalysis. This Clostridium sporogenes protein is (R)-phenyllactyl-CoA dehydratase beta subunit.